The chain runs to 340 residues: Organic solute transporter subunit alpha (340 aa).

The Extracellular segment spans residues Met1–Pro48. The N-linked (GlcNAc...) asparagine glycan is linked to Asn25. The helical transmembrane segment at Val49 to Leu69 threads the bilayer. The Cytoplasmic segment spans residues Glu70–Thr87. Residues Leu88–Ile108 traverse the membrane as a helical segment. Residues Pro109 to Leu114 are Extracellular-facing. Residues Val115–Val135 traverse the membrane as a helical segment. The Cytoplasmic segment spans residues Glu136–Leu181. Residues Leu182–Ile202 traverse the membrane as a helical segment. Topologically, residues Pro203–Leu219 are extracellular. Residues Trp220–Phe240 traverse the membrane as a helical segment. Over Arg241 to Lys255 the chain is Cytoplasmic. A helical transmembrane segment spans residues Phe256–Leu276. Topologically, residues Ala277–Met297 are extracellular. Residues Asn298–Tyr317 traverse the membrane as a helical segment. Over Arg318–Ala340 the chain is Cytoplasmic. Ser330 is modified (phosphoserine).

It belongs to the OST-alpha family. In terms of assembly, interacts with SLC51B. The Ost-alpha/Ost-beta complex is a heterodimer composed of alpha (SLC51A) and beta (SLC51B) subunit. In terms of processing, N-glycosylated. Present at high levels in ileum. In ileum, it is restricted to the apical domain on the mature villus enterocytes with little detectable expression in the goblet cells or crypt enterocytes (at protein level). Expressed in kidney but not in heart, brain, liver, spleen, embryo, lung, thymus, ovary nor testis.

It is found in the cell membrane. It localises to the endoplasmic reticulum membrane. It catalyses the reaction taurocholate(out) = taurocholate(in). The catalysed reaction is tauroursodeoxycholate(out) = tauroursodeoxycholate(in). It carries out the reaction glycoursodeoxycholate(out) = glycoursodeoxycholate(in). The enzyme catalyses glycocholate(out) = glycocholate(in). It catalyses the reaction taurochenodeoxycholate(out) = taurochenodeoxycholate(in). The catalysed reaction is glycochenodeoxycholate(out) = glycochenodeoxycholate(in). It carries out the reaction taurodeoxycholate(out) = taurodeoxycholate(in). The enzyme catalyses glycodeoxycholate(out) = glycodeoxycholate(in). It catalyses the reaction prostaglandin E2(out) = prostaglandin E2(in). The catalysed reaction is estrone 3-sulfate(out) = estrone 3-sulfate(in). It carries out the reaction dehydroepiandrosterone 3-sulfate(out) = dehydroepiandrosterone 3-sulfate(in). In terms of biological role, essential component of the Ost-alpha/Ost-beta complex, a heterodimer that acts as the intestinal basolateral transporter responsible for bile acid export from enterocytes into portal blood. Efficiently transports the major species of bile acids (taurocholate). Taurine conjugates are transported more efficiently across the basolateral membrane than glycine-conjugated bile acids. Can also transport steroids such as estrone 3-sulfate and dehydroepiandrosterone 3-sulfate, therefore playing a role in the enterohepatic circulation of sterols. Able to transport eicosanoids such as prostaglandin E2. The protein is Organic solute transporter subunit alpha (Slc51a) of Mus musculus (Mouse).